The following is a 94-amino-acid chain: MLKPLGDRVIIEVVEKEEKTIGGIVLPDTAKEKPQQGKVVAVGTGRVTDEGKRIDLDVKENDLVIYSKYAGTEVKHDGKEYLIVRESDILAIVG.

Belongs to the GroES chaperonin family. In terms of assembly, heptamer of 7 subunits arranged in a ring. Interacts with the chaperonin GroEL.

It is found in the cytoplasm. In terms of biological role, together with the chaperonin GroEL, plays an essential role in assisting protein folding. The GroEL-GroES system forms a nano-cage that allows encapsulation of the non-native substrate proteins and provides a physical environment optimized to promote and accelerate protein folding. GroES binds to the apical surface of the GroEL ring, thereby capping the opening of the GroEL channel. In Exiguobacterium sp. (strain ATCC BAA-1283 / AT1b), this protein is Co-chaperonin GroES.